The chain runs to 309 residues: Cilia-and flagella-associated protein 96 (309 aa).

The tract at residues 220–249 is disordered; that stretch reads EEKKKTISNTFKPSSPGKKPGGMKAGTFDP.

This sequence belongs to the CFAP96 family. As to expression, detected in testis and fetal liver.

Its subcellular location is the cytoplasm. The protein localises to the cytoskeleton. It localises to the microtubule organizing center. The protein resides in the centrosome. The chain is Cilia-and flagella-associated protein 96 from Homo sapiens (Human).